The primary structure comprises 663 residues: Meiotically up-regulated gene 60 protein (663 aa).

One can recognise a KH domain in the interval 578-644; sequence PAEMHFYVPE…SENLWAVRSL (67 aa).

Its subcellular location is the cytoplasm. The protein localises to the nucleus. The protein resides in the cytoskeleton. It localises to the microtubule organizing center. It is found in the spindle pole body. Has a role in meiosis. This is Meiotically up-regulated gene 60 protein (mug60) from Schizosaccharomyces pombe (strain 972 / ATCC 24843) (Fission yeast).